The primary structure comprises 216 residues: Somatotropin (216 aa).

The N-terminal stretch at 1-26 (MAAGPRTSMLLAFALLCLPWTQEVGA) is a signal peptide. His-45 provides a ligand contact to Zn(2+). Cys-78 and Cys-189 are disulfide-bonded. Ser-131 carries the phosphoserine modification. Residue Glu-198 participates in Zn(2+) binding. An intrachain disulfide couples Cys-206 to Cys-214.

Belongs to the somatotropin/prolactin family.

The protein resides in the secreted. Its function is as follows. Plays an important role in growth control. Its major role in stimulating body growth is to stimulate the liver and other tissues to secrete IGF1. It stimulates both the differentiation and proliferation of myoblasts. It also stimulates amino acid uptake and protein synthesis in muscle and other tissues. In Delphinus delphis (Short-beaked common dolphin), this protein is Somatotropin (GH1).